The primary structure comprises 153 residues: Small ribosomal subunit protein bS16 (153 aa).

The segment at 114–153 (ENEPVGEAITPKKKKAKAEDAEAAADAPAEAAAESEAADK) is disordered. Residues 137–153 (AADAPAEAAAESEAADK) show a composition bias toward low complexity.

It belongs to the bacterial ribosomal protein bS16 family.

The chain is Small ribosomal subunit protein bS16 from Rhodococcus jostii (strain RHA1).